Consider the following 228-residue polypeptide: 2-phospho-L-lactate guanylyltransferase (228 aa).

It belongs to the CofC family. As to quaternary structure, homodimer.

The enzyme catalyses (2S)-2-phospholactate + GTP + H(+) = (2S)-lactyl-2-diphospho-5'-guanosine + diphosphate. It functions in the pathway cofactor biosynthesis; coenzyme F420 biosynthesis. Functionally, guanylyltransferase that catalyzes the activation of (2S)-2-phospholactate (2-PL) as (2S)-lactyl-2-diphospho-5'-guanosine, via the condensation of 2-PL with GTP. It is involved in the biosynthesis of coenzyme F420, a hydride carrier cofactor. In Methanosphaera stadtmanae (strain ATCC 43021 / DSM 3091 / JCM 11832 / MCB-3), this protein is 2-phospho-L-lactate guanylyltransferase.